The sequence spans 614 residues: ETS-related transcription factor Elf-1 (614 aa).

S110, S163, S167, and S168 each carry phosphoserine. The tract at residues 159–199 (TYAHSPGPSSPEQPKRKKGRKTKPPRPDSPTTTPNISVKKK) is disordered. Over residues 173–182 (KRKKGRKTKP) the composition is skewed to basic residues. S187 carries the post-translational modification Phosphoserine. At T190 the chain carries Phosphothreonine. The segment at residues 208–290 (IYLWEFLLAL…EGQRLVYQFK (83 aa)) is a DNA-binding region (ETS). Residues 303 to 371 (DPSCSIESSD…VQPSEALRTV (69 aa)) are disordered. The segment covering 310 to 335 (SSDPSLSSTATSSRNPASRSRASSSP) has biased composition (low complexity). S430 bears the Phosphoserine mark.

This sequence belongs to the ETS family. In terms of assembly, binds to the underphosphorylated form of RB. May interact with other transcription factors in order to regulate specific genes. Interacts with RUNX1.

It is found in the nucleus. Transcription factor that activates the LYN and BLK promoters. The sequence is that of ETS-related transcription factor Elf-1 (ELF1) from Bos taurus (Bovine).